A 559-amino-acid chain; its full sequence is Forkhead box protein O6 (559 aa).

Disordered regions lie at residues 1–77 (MAAK…VGPL) and 163–183 (SWWM…RRAV). The segment at residues 88-182 (WGNLSYADLI…KTGKTPRRRA (95 aa)) is a DNA-binding region (fork-head). The residue at position 184 (Ser-184) is a Phosphoserine. 2 disordered regions span residues 197–232 (KASK…KWAA) and 534–559 (NFDS…WVPG). 2 stretches are compositionally biased toward pro residues: residues 213-222 (DSPPGAPVPG) and 539-553 (LPPP…PPPN).

Post-translationally, phosphorylation of Ser-184 is be important in regulating the transacriptional activity. Expressed in brain in areas of the nucleus accumbens, cingulate cortex, parts of the amygdala and in the hippocampus.

The protein localises to the cytoplasm. The protein resides in the nucleus. Transcriptional activator. In Mus musculus (Mouse), this protein is Forkhead box protein O6 (Foxo6).